Consider the following 236-residue polypeptide: Pyridoxine 5'-phosphate synthase (236 aa).

Asn7 provides a ligand contact to 3-amino-2-oxopropyl phosphate. 1-deoxy-D-xylulose 5-phosphate is bound at residue 9–10; sequence DH. Arg18 contacts 3-amino-2-oxopropyl phosphate. Residue His43 is the Proton acceptor of the active site. 1-deoxy-D-xylulose 5-phosphate-binding residues include Arg45 and His50. Glu69 functions as the Proton acceptor in the catalytic mechanism. 1-deoxy-D-xylulose 5-phosphate is bound at residue Thr99. His190 acts as the Proton donor in catalysis. 3-amino-2-oxopropyl phosphate contacts are provided by residues Gly191 and 212-213; that span reads GH.

This sequence belongs to the PNP synthase family. As to quaternary structure, homooctamer; tetramer of dimers.

Its subcellular location is the cytoplasm. The catalysed reaction is 3-amino-2-oxopropyl phosphate + 1-deoxy-D-xylulose 5-phosphate = pyridoxine 5'-phosphate + phosphate + 2 H2O + H(+). The protein operates within cofactor biosynthesis; pyridoxine 5'-phosphate biosynthesis; pyridoxine 5'-phosphate from D-erythrose 4-phosphate: step 5/5. Catalyzes the complicated ring closure reaction between the two acyclic compounds 1-deoxy-D-xylulose-5-phosphate (DXP) and 3-amino-2-oxopropyl phosphate (1-amino-acetone-3-phosphate or AAP) to form pyridoxine 5'-phosphate (PNP) and inorganic phosphate. The polypeptide is Pyridoxine 5'-phosphate synthase (Desulfosudis oleivorans (strain DSM 6200 / JCM 39069 / Hxd3) (Desulfococcus oleovorans)).